The sequence spans 158 residues: Glycine/sarcosine/betaine reductase complex component A (158 aa).

Selenocysteine 44 is a catalytic residue. Residue selenocysteine 44 is a non-standard amino acid, selenocysteine.

It belongs to the GrdA family. In terms of assembly, monomer. Component of the glycine, sarcosine and betaine reductase complexes, together with components B and C.

It carries out the reaction acetyl phosphate + [thioredoxin]-disulfide + NH4(+) + H2O = [thioredoxin]-dithiol + glycine + phosphate + H(+). It catalyses the reaction acetyl phosphate + methylamine + [thioredoxin]-disulfide + H2O = sarcosine + [thioredoxin]-dithiol + phosphate + H(+). The enzyme catalyses acetyl phosphate + trimethylamine + [thioredoxin]-disulfide + H2O = glycine betaine + [thioredoxin]-dithiol + phosphate + H(+). In the first step of glycine, betaine and sarcosine reductases, the substrate is bound to component PB via a Schiff base intermediate. Then the PB-activated substrate is nucleophilically attacked by the selenol anion of component PA to transform it to a carboxymethylated selenoether and the respective amine. By action of component PC, acetyl phosphate is formed, leaving component PA in its oxidized state. Finally component PA becomes reduced by the thioredoxin system to start a new catalytic cycle of reductive deamination. This Clostridium botulinum (strain ATCC 19397 / Type A) protein is Glycine/sarcosine/betaine reductase complex component A.